Consider the following 408-residue polypeptide: MKKAAIITVGSELLEGLILNRNAQFLCQELKNLGYRVIKVSTVGDHLEDIAEEVRSLLPEVHLLILTGGLGPTKDDLTREAVAKALNRKLLLDYNLKTKIEEKVKKYHSKIPSNIEKQALVIEGAKVIDNPVGSAPGQLLEVDGKKVILLPGPPKELIPMFESLKELLKTPHAFYQVVLKYYSIPEAVLEDLLKEILYSQDRVEVATMADHVEGVRLRLTTSAEHREFLDELVEKILEKTGEYLYGMNDEKMEEVVVRLLKENKKTLAVAESCTGGMLSSLVVNVPGASDVFIGGVVAYSNELKKSILGVKEDTLRKYGAVSEQCVQEMTEGLKKLTEADICVAISGIAGPSGGTPTKPVGTVFIDLFEQNHSTVRYNFSGDRNTIRTRSAMMALENLRKHLKERGRS.

Belongs to the CinA family.

This Thermotoga neapolitana (strain ATCC 49049 / DSM 4359 / NBRC 107923 / NS-E) protein is CinA-like protein.